A 156-amino-acid polypeptide reads, in one-letter code: Ribosomal RNA large subunit methyltransferase H (156 aa).

Residues Leu73, Gly104, and 123-128 (LSALTL) each bind S-adenosyl-L-methionine.

The protein belongs to the RNA methyltransferase RlmH family. Homodimer.

It is found in the cytoplasm. It catalyses the reaction pseudouridine(1915) in 23S rRNA + S-adenosyl-L-methionine = N(3)-methylpseudouridine(1915) in 23S rRNA + S-adenosyl-L-homocysteine + H(+). In terms of biological role, specifically methylates the pseudouridine at position 1915 (m3Psi1915) in 23S rRNA. This chain is Ribosomal RNA large subunit methyltransferase H, found in Shewanella denitrificans (strain OS217 / ATCC BAA-1090 / DSM 15013).